The following is a 122-amino-acid chain: Large ribosomal subunit protein uL14 (122 aa).

The protein belongs to the universal ribosomal protein uL14 family. Part of the 50S ribosomal subunit. Forms a cluster with proteins L3 and L19. In the 70S ribosome, L14 and L19 interact and together make contacts with the 16S rRNA in bridges B5 and B8.

Functionally, binds to 23S rRNA. Forms part of two intersubunit bridges in the 70S ribosome. This is Large ribosomal subunit protein uL14 from Fervidobacterium nodosum (strain ATCC 35602 / DSM 5306 / Rt17-B1).